The following is a 100-amino-acid chain: Large ribosomal subunit protein bL28 (100 aa).

Belongs to the bacterial ribosomal protein bL28 family.

The chain is Large ribosomal subunit protein bL28 from Ehrlichia chaffeensis (strain ATCC CRL-10679 / Arkansas).